The sequence spans 486 residues: MANMKPNLTDLFRLRERADEGAARRENDRLLGLGSTVPQLLRPVWSGAPTVTGNIIGAIVNRGSAGTELLRTGPATNSGGGRMAAQQHAFGADDAAGVKAALLGSIAPTADALRAQQVLTTQVTVTDMCKPDVEGPGSLMLFFRGVRRLLIKLSAETMVRNDLINELETAFMILNRICGLPPVGTNGINNFEASLVSLNVLAAAAAPHYRNTCEVDALRTFVLAGGKDSKLNEKLTNLDLILQASVESRNFPHSILFPAGALTESVNSTNVACVKMLMNGSVELEGGLTRPCGSFRFPACLFLDLDDTRQCGVVPRGADRADGLFYVYLLFLYSTETWHPSYEIYVAKSALGEAGLQSMLDEKFARRRVNNTVAAAPPAGNFYARGRQREDGDWRCYIEDAYRRASGNNAVNPLEQGARPTDLHISFAGVPDRNSATYAAFCQLGVSLGPWSSACRYTTVQRHGLGLKYVELPGLSLKIGTWRACY.

This sequence belongs to the herpesviridae TRX1 protein family. In terms of assembly, interacts with TRX2, MCP and capsid vertex component 2/CVC2.

Its subcellular location is the virion. The protein localises to the host nucleus. Structural component of the T=16 icosahedral capsid. The capsid is composed of pentamers and hexamers of major capsid protein/MCP, which are linked together by heterotrimers called triplexes. These triplexes are formed by a single molecule of triplex protein 1/TRX1 and two copies of triplex protein 2/TRX2. Additionally, TRX1 is required for efficient transport of TRX2 to the nucleus, which is the site of capsid assembly. The chain is Triplex capsid protein 1 from Psittacid herpesvirus 1 (isolate Amazon parrot/-/97-0001/1997) (PsHV-1).